The sequence spans 207 residues: Thiamine-phosphate synthase (207 aa).

4-amino-2-methyl-5-(diphosphooxymethyl)pyrimidine contacts are provided by residues 36-40 (QLRMK) and Asn-68. Mg(2+) is bound by residues Asp-69 and Asp-88. Residue Ser-106 participates in 4-amino-2-methyl-5-(diphosphooxymethyl)pyrimidine binding. 132 to 134 (TNT) contacts 2-[(2R,5Z)-2-carboxy-4-methylthiazol-5(2H)-ylidene]ethyl phosphate. 4-amino-2-methyl-5-(diphosphooxymethyl)pyrimidine is bound at residue Lys-135. 2-[(2R,5Z)-2-carboxy-4-methylthiazol-5(2H)-ylidene]ethyl phosphate-binding positions include Gly-162 and 182-183 (VS).

Belongs to the thiamine-phosphate synthase family. The cofactor is Mg(2+).

It carries out the reaction 2-[(2R,5Z)-2-carboxy-4-methylthiazol-5(2H)-ylidene]ethyl phosphate + 4-amino-2-methyl-5-(diphosphooxymethyl)pyrimidine + 2 H(+) = thiamine phosphate + CO2 + diphosphate. It catalyses the reaction 2-(2-carboxy-4-methylthiazol-5-yl)ethyl phosphate + 4-amino-2-methyl-5-(diphosphooxymethyl)pyrimidine + 2 H(+) = thiamine phosphate + CO2 + diphosphate. The catalysed reaction is 4-methyl-5-(2-phosphooxyethyl)-thiazole + 4-amino-2-methyl-5-(diphosphooxymethyl)pyrimidine + H(+) = thiamine phosphate + diphosphate. The protein operates within cofactor biosynthesis; thiamine diphosphate biosynthesis; thiamine phosphate from 4-amino-2-methyl-5-diphosphomethylpyrimidine and 4-methyl-5-(2-phosphoethyl)-thiazole: step 1/1. In terms of biological role, condenses 4-methyl-5-(beta-hydroxyethyl)thiazole monophosphate (THZ-P) and 2-methyl-4-amino-5-hydroxymethyl pyrimidine pyrophosphate (HMP-PP) to form thiamine monophosphate (TMP). This Methanococcus maripaludis (strain DSM 14266 / JCM 13030 / NBRC 101832 / S2 / LL) protein is Thiamine-phosphate synthase.